A 63-amino-acid polypeptide reads, in one-letter code: Anionic peptide 10.1 (63 aa).

The first 20 residues, 1–20 (MISRFCLLFLLVFVVSKIQA), serve as a signal peptide directing secretion.

This sequence belongs to the non-disulfide-bridged peptide (NDBP) superfamily. Long chain multifunctional peptide (group 2) family. As to expression, expressed by the venom gland.

It is found in the secreted. The chain is Anionic peptide 10.1 from Lychas mucronatus (Chinese swimming scorpion).